The chain runs to 525 residues: GMP synthase [glutamine-hydrolyzing] (525 aa).

Residues 8–207 enclose the Glutamine amidotransferase type-1 domain; the sequence is KILILDFGSQ…ALDICGCAAN (200 aa). Cysteine 85 (nucleophile) is an active-site residue. Residues histidine 181 and glutamate 183 contribute to the active site. In terms of domain architecture, GMPS ATP-PPase spans 208 to 400; sequence WKPSSIIEDA…LGLPYNMLYR (193 aa). 235-241 is an ATP binding site; the sequence is SGGVDSS.

As to quaternary structure, homodimer.

The enzyme catalyses XMP + L-glutamine + ATP + H2O = GMP + L-glutamate + AMP + diphosphate + 2 H(+). The protein operates within purine metabolism; GMP biosynthesis; GMP from XMP (L-Gln route): step 1/1. Its function is as follows. Catalyzes the synthesis of GMP from XMP. This chain is GMP synthase [glutamine-hydrolyzing], found in Shewanella baltica (strain OS223).